A 148-amino-acid chain; its full sequence is Deoxyuridine 5'-triphosphate nucleotidohydrolase (148 aa).

Residues 67-69 (RSG), asparagine 80, 84-86 (LID), and methionine 94 each bind substrate.

The protein belongs to the dUTPase family. Requires Mg(2+) as cofactor.

The catalysed reaction is dUTP + H2O = dUMP + diphosphate + H(+). It participates in pyrimidine metabolism; dUMP biosynthesis; dUMP from dCTP (dUTP route): step 2/2. Its function is as follows. This enzyme is involved in nucleotide metabolism: it produces dUMP, the immediate precursor of thymidine nucleotides and it decreases the intracellular concentration of dUTP so that uracil cannot be incorporated into DNA. This Burkholderia cenocepacia (strain ATCC BAA-245 / DSM 16553 / LMG 16656 / NCTC 13227 / J2315 / CF5610) (Burkholderia cepacia (strain J2315)) protein is Deoxyuridine 5'-triphosphate nucleotidohydrolase.